We begin with the raw amino-acid sequence, 244 residues long: Phosphoadenosine 5'-phosphosulfate reductase (244 aa).

The active-site Nucleophile; cysteine thiosulfonate intermediate is the Cys239.

This sequence belongs to the PAPS reductase family. CysH subfamily.

It is found in the cytoplasm. The enzyme catalyses [thioredoxin]-disulfide + sulfite + adenosine 3',5'-bisphosphate + 2 H(+) = [thioredoxin]-dithiol + 3'-phosphoadenylyl sulfate. It participates in sulfur metabolism; hydrogen sulfide biosynthesis; sulfite from sulfate: step 3/3. Functionally, catalyzes the formation of sulfite from phosphoadenosine 5'-phosphosulfate (PAPS) using thioredoxin as an electron donor. The polypeptide is Phosphoadenosine 5'-phosphosulfate reductase (Shigella dysenteriae serotype 1 (strain Sd197)).